A 436-amino-acid polypeptide reads, in one-letter code: Cytochrome b5-related protein (436 aa).

A Cytochrome b5 heme-binding domain is found at 16-100 (PTYRNSALIT…IAKYKVRDAA (85 aa)). Heme is bound by residues His-59 and His-82.

In terms of tissue distribution, muscle.

In terms of biological role, may play a role in muscle cell metabolism. This Drosophila melanogaster (Fruit fly) protein is Cytochrome b5-related protein (Cyt-b5-r).